We begin with the raw amino-acid sequence, 168 residues long: uncharacterized protein (168 aa).

Transmembrane regions (helical) follow at residues 1–21 (MFWLLIAILIVQRAAEMAVAR), 41–61 (PYIITMHILFFLSLIAEVLLM), 68–88 (WWLGIAAVILSVQIVRYWALC), and 123–143 (VILEILLIPLLYQAYVTMCLF).

The protein resides in the cell membrane. This is an uncharacterized protein from Bacillus subtilis (strain 168).